The sequence spans 183 residues: Ras-like protein (183 aa).

Position 10–17 (10–17 (GAGGVGKS)) interacts with GTP. The Effector region signature appears at 32–40 (YDPTIEDSY). Residues 57–61 (DTAGQ) and 116–119 (NKCD) contribute to the GTP site.

The protein belongs to the small GTPase superfamily. Ras family.

Its subcellular location is the cell membrane. The enzyme catalyses GTP + H2O = GDP + phosphate + H(+). Its activity is regulated as follows. Alternates between an inactive form bound to GDP and an active form bound to GTP. Activated by a guanine nucleotide-exchange factor (GEF) and inactivated by a GTPase-activating protein (GAP). Functionally, ras proteins bind GDP/GTP and possess intrinsic GTPase activity. The protein is Ras-like protein of Carassius auratus (Goldfish).